We begin with the raw amino-acid sequence, 384 residues long: S-adenosylmethionine synthase (384 aa).

Residue His15 coordinates ATP. Position 17 (Asp17) interacts with Mg(2+). Glu43 is a binding site for K(+). The L-methionine site is built by Glu56 and Gln99. The tract at residues 99–109 (QSPDINQGVDR) is flexible loop. Residues 164-166 (DAK), 230-231 (RF), Asp239, 245-246 (RK), Ala262, and Lys266 contribute to the ATP site. Asp239 provides a ligand contact to L-methionine. Position 270 (Lys270) interacts with L-methionine.

Belongs to the AdoMet synthase family. As to quaternary structure, homotetramer; dimer of dimers. Mg(2+) is required as a cofactor. K(+) serves as cofactor.

It localises to the cytoplasm. The enzyme catalyses L-methionine + ATP + H2O = S-adenosyl-L-methionine + phosphate + diphosphate. Its pathway is amino-acid biosynthesis; S-adenosyl-L-methionine biosynthesis; S-adenosyl-L-methionine from L-methionine: step 1/1. Functionally, catalyzes the formation of S-adenosylmethionine (AdoMet) from methionine and ATP. The overall synthetic reaction is composed of two sequential steps, AdoMet formation and the subsequent tripolyphosphate hydrolysis which occurs prior to release of AdoMet from the enzyme. The chain is S-adenosylmethionine synthase from Salmonella choleraesuis (strain SC-B67).